The chain runs to 129 residues: uncharacterized protein (129 aa).

2 disordered regions span residues 1 to 57 and 87 to 129; these read MGGG…LPNH and PVSS…WLWW. A compositionally biased stretch (basic and acidic residues) spans 10-20; the sequence is SGEERREKRSG. The span at 87 to 99 shows a compositional bias: low complexity; it reads PVSSSPSRSPSSS.

This is an uncharacterized protein from Homo sapiens (Human).